A 170-amino-acid chain; its full sequence is Protein Rex (170 aa).

The segment covering 1 to 16 has biased composition (basic residues); the sequence is MPKTRRQRTRRARRNR. Disordered stretches follow at residues 1-27 and 69-170; these read MPKT…SQDL and VQST…GEKP. The Nuclear localization signal, and RNA-binding (RxRE) motif lies at 2–19; sequence PKTRRQRTRRARRNRPPT. The homomultimerization stretch occupies residues 57–71; sequence PPAYIDMPSWPPVQS. The segment covering 82–95 has biased composition (low complexity); it reads ALSALLSNTLSLAS. A Nuclear export signal motif is present at residues 83–94; that stretch reads LSALLSNTLSLA. Positions 124 to 132 are homomultimerization; sequence PSFNQCEST. Over residues 143 to 160 the composition is skewed to low complexity; that stretch reads PSGISSPPSPSPNLASVP. Phosphoserine; by host occurs at positions 151 and 153. The segment covering 161-170 has biased composition (polar residues); the sequence is KTSTPPGEKP.

Belongs to the deltaretrovirus Rex protein family. In terms of assembly, homomultimer. In terms of processing, phosphorylation is essential for RNA-binding and function.

The protein localises to the host nucleus. The protein resides in the host nucleolus. It is found in the host cytoplasm. Its function is as follows. Rex escorts unspliced gag-pro-pol and singly spliced env mRNAs out of the nucleus of infected cells. These mRNAs carry a recognition sequence called Rex responsive element (RxRE or XRE) located at the 3' region of the long terminal repeat (LTR). This function is essential since most HTLV proteins are translated from unspliced or partially spliced pre-mRNAs that cannot exit the nucleus by the pathway used by fully processed cellular mRNAs. In Human T-cell leukemia virus 2 (HTLV-2), this protein is Protein Rex.